The following is a 543-amino-acid chain: CTP synthase (543 aa).

Residues 1-270 (MNNLTSTKFI…DTQILKHFNI (270 aa)) form an amidoligase domain region. Ser18 serves as a coordination point for CTP. Ser18 contributes to the UTP binding site. Residues 19–24 (SLGKGL) and Asp76 each bind ATP. Mg(2+)-binding residues include Asp76 and Glu144. Residues 151–153 (DIE), 191–196 (KTKPTQ), and Lys227 contribute to the CTP site. Residues 191-196 (KTKPTQ) and Lys227 contribute to the UTP site. Residues 295-537 (TIAIIGKYIK…IQASLNYQET (243 aa)) form the Glutamine amidotransferase type-1 domain. Gly356 is a binding site for L-glutamine. The Nucleophile; for glutamine hydrolysis role is filled by Cys383. L-glutamine-binding positions include 384–387 (MGMQ), Glu407, and Arg462. Catalysis depends on residues His510 and Glu512.

This sequence belongs to the CTP synthase family. Homotetramer.

It carries out the reaction UTP + L-glutamine + ATP + H2O = CTP + L-glutamate + ADP + phosphate + 2 H(+). The catalysed reaction is L-glutamine + H2O = L-glutamate + NH4(+). It catalyses the reaction UTP + NH4(+) + ATP = CTP + ADP + phosphate + 2 H(+). The protein operates within pyrimidine metabolism; CTP biosynthesis via de novo pathway; CTP from UDP: step 2/2. Its activity is regulated as follows. Allosterically activated by GTP, when glutamine is the substrate; GTP has no effect on the reaction when ammonia is the substrate. The allosteric effector GTP functions by stabilizing the protein conformation that binds the tetrahedral intermediate(s) formed during glutamine hydrolysis. Inhibited by the product CTP, via allosteric rather than competitive inhibition. In terms of biological role, catalyzes the ATP-dependent amination of UTP to CTP with either L-glutamine or ammonia as the source of nitrogen. Regulates intracellular CTP levels through interactions with the four ribonucleotide triphosphates. This Ehrlichia ruminantium (strain Gardel) protein is CTP synthase.